Here is a 420-residue protein sequence, read N- to C-terminus: UDP-N-acetylglucosamine 1-carboxyvinyltransferase (420 aa).

22–23 serves as a coordination point for phosphoenolpyruvate; sequence KN. Arg-93 lines the UDP-N-acetyl-alpha-D-glucosamine pocket. The active-site Proton donor is Cys-117. Position 117 is a 2-(S-cysteinyl)pyruvic acid O-phosphothioketal (Cys-117). Residues 122–126, Asp-307, and Val-329 contribute to the UDP-N-acetyl-alpha-D-glucosamine site; that span reads RPVDL.

It belongs to the EPSP synthase family. MurA subfamily.

Its subcellular location is the cytoplasm. It carries out the reaction phosphoenolpyruvate + UDP-N-acetyl-alpha-D-glucosamine = UDP-N-acetyl-3-O-(1-carboxyvinyl)-alpha-D-glucosamine + phosphate. Its pathway is cell wall biogenesis; peptidoglycan biosynthesis. Functionally, cell wall formation. Adds enolpyruvyl to UDP-N-acetylglucosamine. This chain is UDP-N-acetylglucosamine 1-carboxyvinyltransferase, found in Hahella chejuensis (strain KCTC 2396).